The chain runs to 871 residues: Pentatricopeptide repeat-containing protein At3g06920 (871 aa).

21 PPR repeats span residues 97–131, 132–166, 167–201, 202–236, 237–271, 272–306, 307–341, 342–372, 376–410, 411–445, 446–480, 481–515, 516–550, 551–585, 586–620, 621–655, 656–690, 691–725, 726–760, 761–795, and 796–830; these read CPESYNSLLLVMARCRNFDALDQILGEMSVAGFGP, SVNTCIEMVLGCVKANKLREGYDVVQMMRKFKFRP, AFSAYTTLIGAFSAVNHSDMMLTLFQQMQELGYEP, TVHLFTTLIRGFAKEGRVDSALSLLDEMKSSSLDA, DIVLYNVCIDSFGKVGKVDMAWKFFHEIEANGLKP, DEVTYTSMIGVLCKANRLDEAVEMFEHLEKNRRVP, CTYAYNTMIMGYGSAGKFDEAYSLLERQRAKGSIP, SVIAYNCILTCLRKMGKVDEALKVFEEMKKD, NLSTYNILIDMLCRAGKLDTAFELRDSMQKAGLFP, NVRTVNIMVDRLCKSQKLDEACAMFEEMDYKVCTP, DEITFCSLIDGLGKVGRVDDAYKVYEKMLDSDCRT, NSIVYTSLIKNFFNHGRKEDGHKIYKDMINQNCSP, DLQLLNTYMDCMFKAGEPEKGRAMFEEIKARRFVP, DARSYSILIHGLIKAGFANETYELFYSMKEQGCVL, DTRAYNIVIDGFCKCGKVNKAYQLLEEMKTKGFEP, TVVTYGSVIDGLAKIDRLDEAYMLFEEAKSKRIEL, NVVIYSSLIDGFGKVGRIDEAYLILEELMQKGLTP, NLYTWNSLLDALVKAEEINEALVCFQSMKELKCTP, NQVTYGILINGLCKVRKFNKAFVFWQEMQKQGMKP, STISYTTMISGLAKAGNIAEAGALFDRFKANGGVP, and DSACYNAMIEGLSNGNRAMDAFSLFEETRRRGLPI.

The protein belongs to the PPR family. P subfamily.

This chain is Pentatricopeptide repeat-containing protein At3g06920, found in Arabidopsis thaliana (Mouse-ear cress).